Consider the following 880-residue polypeptide: Pyruvate, phosphate dikinase (880 aa).

The interval 1-348 is N-terminal; the sequence is MNKLIYYFGN…LYILQTRTAK (348 aa). Residue arginine 97 coordinates ATP. The interval 349-405 is linker 1; it reads RTAIAAINIAVQMVKEKLISKEQALMRIDPESLNQLLHTRIDYSKGLTSIAEGLPAS. Positions 406–503 are central; that stretch reads PGAATGIVVF…VIKQGDIITI (98 aa). Position 458 is a phosphothreonine; by PDRP1 (threonine 458). The Tele-phosphohistidine intermediate role is filled by histidine 460. The linker 2 stretch occupies residues 504 to 538; the sequence is DGGSGKIFLGEMPLIQPTFSEESKLILDWADEISS. The segment at 539 to 880 is C-terminal; that stretch reads LKVRANAETV…AAQAKIKQGS (342 aa). Substrate is bound by residues arginine 566, arginine 622, glutamate 750, glycine 771, threonine 772, asparagine 773, and aspartate 774. Glutamate 750 serves as a coordination point for Mg(2+). Aspartate 774 serves as a coordination point for Mg(2+). Cysteine 836 functions as the Proton donor in the catalytic mechanism.

It belongs to the PEP-utilizing enzyme family. Homodimer. The cofactor is Mg(2+). In terms of processing, phosphorylation of Thr-458 in the dark inactivates the enzyme. Dephosphorylation upon light stimulation reactivates the enzyme.

It catalyses the reaction pyruvate + phosphate + ATP = phosphoenolpyruvate + AMP + diphosphate + H(+). Activated by light-induced dephosphorylation. Inhibited by dark-induced phosphorylation. Both reactions are catalyzed by PDRP1. In terms of biological role, catalyzes the reversible phosphorylation of pyruvate and phosphate. The protein is Pyruvate, phosphate dikinase (ppdK) of Rickettsia prowazekii (strain Madrid E).